We begin with the raw amino-acid sequence, 88 residues long: Alkene monooxygenase system, oxygenase component subunit gamma (88 aa).

It belongs to the TmoB/XamoB family. As to quaternary structure, the alkene monooxygenase multicomponent enzyme system is composed of an electron transfer component and a monooxygenase component interacting with the effector protein XamoD. The electron transfer component is composed of a ferredoxin reductase (XamoF) and a ferredoxin (XamoC), and the monooxygenase component is formed by a heterohexamer (dimer of heterotrimers) of two alpha subunits (XamoA), two beta subunits (XamoE) and two gamma subunits (XamoB).

It localises to the cytoplasm. The catalysed reaction is propene + NADH + O2 + H(+) = 1,2-epoxypropane + NAD(+) + H2O. Inhibited by propyne. Functionally, component of the alkene monooxygenase multicomponent enzyme system which catalyzes the O2- and NADH-dependent epoxidation of short chain (C2 to C6) alkenes to their corresponding epoxides. Also able to catalyze the oxidation of a number of chlorinated alkenes, including trichloroethylene, cis- and trans-1,2-dichloroethylene, vinyl chloride, 1-chloropropylene, 1,3-dichloropropylene and 2,3-dichloropropylene. The chain is Alkene monooxygenase system, oxygenase component subunit gamma from Xanthobacter autotrophicus (strain ATCC BAA-1158 / Py2).